The sequence spans 349 residues: Flavonol synthase/flavanone 3-hydroxylase (349 aa).

A Fe2OG dioxygenase domain is found at 213 to 310 (DIVYMLKINY…RMSWPVFLEP (98 aa)). Fe cation contacts are provided by H238, D240, and H291.

It belongs to the iron/ascorbate-dependent oxidoreductase family. It depends on Fe cation as a cofactor. Requires L-ascorbate as cofactor.

It localises to the cytoplasm. It carries out the reaction a (2R,3R)-dihydroflavonol + 2-oxoglutarate + O2 = a flavonol + succinate + CO2 + H2O. The catalysed reaction is a (2S)-flavan-4-one + 2-oxoglutarate + O2 = a (2R,3R)-dihydroflavonol + succinate + CO2. The protein operates within secondary metabolite biosynthesis; flavonoid biosynthesis. Catalyzes the formation of flavonols from dihydroflavonols. It can act on dihydrokaempferol to produce kaempferol, on dihydroquercetin to produce quercitin and on dihydromyricetin to produce myricetin. This chain is Flavonol synthase/flavanone 3-hydroxylase, found in Solanum tuberosum (Potato).